The sequence spans 962 residues: Oncostatin-M-specific receptor subunit beta (962 aa).

The first 28 residues, 1–28 (MAFSVVLHQVTFLLAVLSLRTSQSKVLG), serve as a signal peptide directing secretion. Topologically, residues 29 to 738 (EPLQLTPEIH…VTTPDVRSHM (710 aa)) are extracellular. N-linked (GlcNAc...) asparagine glycosylation is present at Asn-219. 5 Fibronectin type-III domains span residues 237–332 (EPKN…VHPK), 333–426 (APHD…TPEA), 428–527 (PSEA…SGHE), 528–621 (EVHE…TQEL), and 623–734 (PSVN…TPDV). Cys-243 and Cys-253 are joined by a disulfide. Asn-324 carries an N-linked (GlcNAc...) asparagine glycan. The WSXWS motif signature appears at 413–417 (WSDWM). Asn-492, Asn-578, and Asn-723 each carry an N-linked (GlcNAc...) asparagine glycan. The chain crosses the membrane as a helical span at residues 739 to 759 (LLQIILPMTLGVFLSIIVCYW). Residues 760–962 (KSQWVKEKCY…ASLKENNLTS (203 aa)) are Cytoplasmic-facing. The Box 1 motif motif lies at 768-776 (CYPDIPNPY). Residues 818-840 (VGSGKLHTEDVPTKPPLVPTEKD) form a disordered region.

It belongs to the type I cytokine receptor family. Type 2 subfamily. In terms of assembly, heterodimer composed of OSMR and IL6ST (type II OSM receptor). Heterodimer with IL31RA to form the IL31 receptor. In terms of tissue distribution, widely expressed. Expressed at high levels in the liver, skin and spleen. In the liver it is expressed exclusively in the oval cells.

It is found in the membrane. In terms of biological role, associates with IL31RA to form the IL31 receptor. Binds IL31 and activates STAT1, STAT3 and STAT5. Capable of transducing OSM-specific signaling events. The OSM/OSM-R system is pivotal in the differentiation of oval cells into hepatocytes, thereby promoting liver regeneration. The sequence is that of Oncostatin-M-specific receptor subunit beta (Osmr) from Rattus norvegicus (Rat).